Reading from the N-terminus, the 501-residue chain is Pyruvate kinase (501 aa).

Residue Arg50 participates in substrate binding. Residues Asn52, Ser54, Asp85, and Thr86 each contribute to the K(+) site. 52–55 is an ATP binding site; sequence NFSH. Positions 92 and 178 each coordinate ATP. Position 243 (Glu243) interacts with Mg(2+). Substrate-binding residues include Gly266, Asp267, and Thr299. A Mg(2+)-binding site is contributed by Asp267.

This sequence belongs to the pyruvate kinase family. As to quaternary structure, homotetramer. Requires Mg(2+) as cofactor. K(+) is required as a cofactor.

It catalyses the reaction pyruvate + ATP = phosphoenolpyruvate + ADP + H(+). It functions in the pathway carbohydrate degradation; glycolysis; pyruvate from D-glyceraldehyde 3-phosphate: step 5/5. The protein is Pyruvate kinase (PYK1) of Naumovozyma castellii (Yeast).